Reading from the N-terminus, the 227-residue chain is NAD(P)H-hydrate epimerase (227 aa).

In terms of domain architecture, YjeF N-terminal spans 10–227 (MRALETAAFN…GKIMVQYIGL (218 aa)). Residue 62-66 (NNGGD) coordinates (6S)-NADPHX. K(+) is bound by residues Asn63 and Asp142. (6S)-NADPHX contacts are provided by residues 146–152 (GIGLNRP) and Asp176. Residue Ser179 coordinates K(+).

The protein belongs to the NnrE/AIBP family. It depends on K(+) as a cofactor.

It catalyses the reaction (6R)-NADHX = (6S)-NADHX. The enzyme catalyses (6R)-NADPHX = (6S)-NADPHX. Catalyzes the epimerization of the S- and R-forms of NAD(P)HX, a damaged form of NAD(P)H that is a result of enzymatic or heat-dependent hydration. This is a prerequisite for the S-specific NAD(P)H-hydrate dehydratase to allow the repair of both epimers of NAD(P)HX. The protein is NAD(P)H-hydrate epimerase of Roseobacter litoralis (strain ATCC 49566 / DSM 6996 / JCM 21268 / NBRC 15278 / OCh 149).